A 1201-amino-acid chain; its full sequence is DNA-directed RNA polymerase subunit beta' (1201 aa).

Zn(2+)-binding residues include C60, C62, C75, and C78. Residues D449, D451, and D453 each coordinate Mg(2+). Positions 818, 892, 899, and 902 each coordinate Zn(2+).

Belongs to the RNA polymerase beta' chain family. In terms of assembly, the RNAP catalytic core consists of 2 alpha, 1 beta, 1 beta' and 1 omega subunit. When a sigma factor is associated with the core the holoenzyme is formed, which can initiate transcription. Requires Mg(2+) as cofactor. The cofactor is Zn(2+).

The catalysed reaction is RNA(n) + a ribonucleoside 5'-triphosphate = RNA(n+1) + diphosphate. DNA-dependent RNA polymerase catalyzes the transcription of DNA into RNA using the four ribonucleoside triphosphates as substrates. This chain is DNA-directed RNA polymerase subunit beta', found in Listeria monocytogenes serovar 1/2a (strain ATCC BAA-679 / EGD-e).